We begin with the raw amino-acid sequence, 235 residues long: Large ribosomal subunit protein uL1 (235 aa).

The protein belongs to the universal ribosomal protein uL1 family. As to quaternary structure, part of the 50S ribosomal subunit.

Binds directly to 23S rRNA. The L1 stalk is quite mobile in the ribosome, and is involved in E site tRNA release. Functionally, protein L1 is also a translational repressor protein, it controls the translation of the L11 operon by binding to its mRNA. The sequence is that of Large ribosomal subunit protein uL1 from Parasynechococcus marenigrum (strain WH8102).